A 374-amino-acid chain; its full sequence is Spore germination protein B3 (374 aa).

Residues 1–19 (MKTASKFSVMFFMLLALCG) form the signal peptide. Cys-20 carries N-palmitoyl cysteine lipidation. A lipid anchor (S-diacylglycerol cysteine) is attached at Cys-20.

The protein belongs to the GerABKC lipoprotein family.

It localises to the cell membrane. In terms of biological role, involved in the response to the germinative mixture of L-asparagine, glucose, fructose and potassium ions (AGFK). Cannot stimulate germination in the absence of gerD and gerK gene products (fructose and glucose receptors respectively). The polypeptide is Spore germination protein B3 (gerBC) (Bacillus subtilis (strain 168)).